Reading from the N-terminus, the 329-residue chain is GTP 3',8-cyclase (329 aa).

Residues alanine 8–alanine 234 form the Radical SAM core domain. Residue arginine 17 coordinates GTP. 2 residues coordinate [4Fe-4S] cluster: cysteine 24 and cysteine 28. Tyrosine 30 provides a ligand contact to S-adenosyl-L-methionine. Cysteine 31 is a [4Fe-4S] cluster binding site. Arginine 68 contributes to the GTP binding site. Residue glycine 72 coordinates S-adenosyl-L-methionine. Threonine 99 contributes to the GTP binding site. Serine 123 serves as a coordination point for S-adenosyl-L-methionine. Residue lysine 160 coordinates GTP. Methionine 194 lines the S-adenosyl-L-methionine pocket. Residues cysteine 257 and cysteine 260 each coordinate [4Fe-4S] cluster. A GTP-binding site is contributed by arginine 262–arginine 264. Cysteine 274 contacts [4Fe-4S] cluster.

The protein belongs to the radical SAM superfamily. MoaA family. Monomer and homodimer. [4Fe-4S] cluster is required as a cofactor.

It carries out the reaction GTP + AH2 + S-adenosyl-L-methionine = (8S)-3',8-cyclo-7,8-dihydroguanosine 5'-triphosphate + 5'-deoxyadenosine + L-methionine + A + H(+). The protein operates within cofactor biosynthesis; molybdopterin biosynthesis. Its function is as follows. Catalyzes the cyclization of GTP to (8S)-3',8-cyclo-7,8-dihydroguanosine 5'-triphosphate. This is GTP 3',8-cyclase from Escherichia coli O139:H28 (strain E24377A / ETEC).